Consider the following 185-residue polypeptide: Ribosome-recycling factor (185 aa).

A disordered region spans residues 137-159; sequence EDLKADEKAKDISEDDRKRMEDE.

The protein belongs to the RRF family.

The protein localises to the cytoplasm. In terms of biological role, responsible for the release of ribosomes from messenger RNA at the termination of protein biosynthesis. May increase the efficiency of translation by recycling ribosomes from one round of translation to another. The sequence is that of Ribosome-recycling factor from Erythrobacter litoralis (strain HTCC2594).